The chain runs to 534 residues: Kelch repeat and BTB domain-containing protein 4 (534 aa).

One can recognise a BTB domain in the interval 61–128 (ADVTISVEGR…IYHGTVKLRA (68 aa)). The BACK domain occupies 163–255 (CLQVMWLADR…SLKEIGENVH (93 aa)). Kelch repeat units follow at residues 255 to 301 (HIYL…KHGG), 302 to 344 (DLYV…SVPG), 347 to 394 (AIYS…NLNG), 396 to 446 (IYLL…VHKD), and 448 to 497 (VFIV…VFRD).

Component of the BCR(KBTBD4) E3 ubiquitin ligase complex, at least composed of CUL3, KBTBD4 and RBX1.

Its function is as follows. Substrate-specific adapter of a BCR (BTB-CUL3-RBX1) E3 ubiquitin ligase complex which targets CoREST corepressor complex components RCOR1, KDM1A/LSD1 and HDAC2 for proteasomal degradation. RCOR1 is likely to be the primary target while degradation of KDM1A and HDAC2 is likely due to their association with RCOR1. Also targets RCOR3, MIER2 and MIER3 for proteasomal degradation as well as associated proteins ZNF217 and RREB1. Degradation is dependent on the presence of an ELM2 domain in the target proteins. In Mus musculus (Mouse), this protein is Kelch repeat and BTB domain-containing protein 4 (Kbtbd4).